Consider the following 256-residue polypeptide: Hydroxyacylglutathione hydrolase (256 aa).

The Zn(2+) site is built by His55, His57, Asp59, His60, His113, Asp132, and His170.

It belongs to the metallo-beta-lactamase superfamily. Glyoxalase II family. In terms of assembly, monomer. Zn(2+) serves as cofactor.

The catalysed reaction is an S-(2-hydroxyacyl)glutathione + H2O = a 2-hydroxy carboxylate + glutathione + H(+). It functions in the pathway secondary metabolite metabolism; methylglyoxal degradation; (R)-lactate from methylglyoxal: step 2/2. Functionally, thiolesterase that catalyzes the hydrolysis of S-D-lactoyl-glutathione to form glutathione and D-lactic acid. This chain is Hydroxyacylglutathione hydrolase, found in Methylococcus capsulatus (strain ATCC 33009 / NCIMB 11132 / Bath).